The following is a 425-amino-acid chain: MANTVIIGAQWGDEGKGKIVDMLSAQSRAIVRFQGGNNAGHTIKVQGEETILHLIPSGILHADKMCLIGNGVVLDPHVFLEEVDHLAAKGVDVSAARLGISKKAHLIMPYHKSLDKAREAKRASHKIGTTGRGIGPCYEDKAARVGLRAGDLANPDLVRAKVAHALQEKNTLLRDLYKFDPLDEAAVCQELLALAPRLLPYLTEVEDHIQKIQAQGGDILFEGAQGIHLDIDHGTYPFVTSSNTVSGNASAGCGVGPSALHRVVGIVKAYTTRVGSGPFPTEQLDDTGSYLRTQGHEFGATTGRPRRCGWLDAVVLRESVRLCGMTDIALTKLDVLQNLPGLRICVAYEYEGHKLDYMPQEEGALEKVTPVYEDLPGFEEDITGCTRFDDLPETVRAYIARIEELVGVKVSMVSVGAERRQTIVR.

Residues 12–18 (GDEGKGK) and 40–42 (GHT) contribute to the GTP site. The Proton acceptor role is filled by aspartate 13. Aspartate 13 and glycine 40 together coordinate Mg(2+). IMP-binding positions include 13 to 16 (DEGK), 38 to 41 (NAGH), threonine 130, arginine 144, glutamine 225, threonine 240, and arginine 304. Residue histidine 41 is the Proton donor of the active site. 300-306 (ATTGRPR) lines the substrate pocket. GTP-binding positions include arginine 306, 332–334 (KLD), and 414–416 (SVG).

It belongs to the adenylosuccinate synthetase family. Homodimer. The cofactor is Mg(2+).

It localises to the cytoplasm. The catalysed reaction is IMP + L-aspartate + GTP = N(6)-(1,2-dicarboxyethyl)-AMP + GDP + phosphate + 2 H(+). Its pathway is purine metabolism; AMP biosynthesis via de novo pathway; AMP from IMP: step 1/2. Its function is as follows. Plays an important role in the de novo pathway of purine nucleotide biosynthesis. Catalyzes the first committed step in the biosynthesis of AMP from IMP. This is Adenylosuccinate synthetase from Desulfovibrio desulfuricans (strain ATCC 27774 / DSM 6949 / MB).